The following is a 515-amino-acid chain: MKLANYVYGQWIEGAGEGAALTDPVTGEALVRVSSDGIDVARALEFARTAGGAALKALTYEERAAKLAAIAELLQAKRAEYFDISLRNSGATEGDASFDVDGAIFTVKSYARAGKALGAGRHLKEGGRVALAKTDVFQGQHFLMPLTGVAVFINAFNFPAWGLWEKAAPALLAGVPVFAKPATPTAWLAQRMVADVVEAGILPPGAISIVCGGARDLLDHVTECDVVSFTGSADTAARMRTHPNVVARSVRINIEADSVNSAILGPDAQPGTPEFDLAVKEIVREMTVKTGQKCTAIRRILAPAGVSRALADAVSGKLAGCKVGNPRSEGVRVGPLVSKAQQAAAFEGLAKLRQECEVVFGGDPDFEPVDADAAVSAFVQPTLLYCDKGLAARHVHDVEVFGPVATMVPYADTRDAVAIARRGHGSLVASVYSGDAAFLGELVPGIADLHGRVMVVDAAVGANHTGHGNVMPTCLHGGPRARRRRRGVGRSARAGDVSPPLRRAGRPRGAGSPVA.

Active-site residues include Glu-255 and Cys-294. The interval 470–515 is disordered; it reads VMPTCLHGGPRARRRRRGVGRSARAGDVSPPLRRAGRPRGAGSPVA. A compositionally biased stretch (basic residues) spans 479 to 488; sequence PRARRRRRGV. The segment covering 489 to 515 has biased composition (low complexity); the sequence is GRSARAGDVSPPLRRAGRPRGAGSPVA.

This sequence belongs to the aldehyde dehydrogenase family. In terms of assembly, homodimer.

The enzyme catalyses (3Z)-6-oxohex-3-enoyl-CoA + NADP(+) + H2O = cis-3,4-dehydroadipyl-CoA + NADPH + 2 H(+). Its function is as follows. Catalyzes the NADP-dependent oxidation of 3,4-dehydroadipyl-CoA semialdehyde to form cis-3,4-dehydroadipyl-CoA. This Aromatoleum evansii (Azoarcus evansii) protein is 3,4-dehydroadipyl-CoA semialdehyde dehydrogenase (boxD).